The chain runs to 297 residues: Aspartate carbamoyltransferase catalytic subunit (297 aa).

Positions 51 and 52 each coordinate carbamoyl phosphate. K79 serves as a coordination point for L-aspartate. Residues R101, H129, and Q132 each coordinate carbamoyl phosphate. Positions 162 and 216 each coordinate L-aspartate. G257 and P258 together coordinate carbamoyl phosphate.

Belongs to the aspartate/ornithine carbamoyltransferase superfamily. ATCase family. Heterododecamer (2C3:3R2) of six catalytic PyrB chains organized as two trimers (C3), and six regulatory PyrI chains organized as three dimers (R2).

The enzyme catalyses carbamoyl phosphate + L-aspartate = N-carbamoyl-L-aspartate + phosphate + H(+). Its pathway is pyrimidine metabolism; UMP biosynthesis via de novo pathway; (S)-dihydroorotate from bicarbonate: step 2/3. Catalyzes the condensation of carbamoyl phosphate and aspartate to form carbamoyl aspartate and inorganic phosphate, the committed step in the de novo pyrimidine nucleotide biosynthesis pathway. The polypeptide is Aspartate carbamoyltransferase catalytic subunit (Myxococcus xanthus (strain DK1622)).